A 614-amino-acid chain; its full sequence is Major facilitator superfamily domain-containing protein 6-like protein B (614 aa).

A run of 2 helical transmembrane segments spans residues 41–61 (LGLGASLVGIIIGFKHAVHLL) and 78–98 (FFIMASLLLSAGAGGLFAFYP). Over residues 177-191 (HQRFTDQFPSSSPLT) the composition is skewed to polar residues. The tract at residues 177-243 (HQRFTDQFPS…PFATHPNVSH (67 aa)) is disordered. Over residues 205–227 (GSGKAQKANSSKSSASNSKQRSS) the composition is skewed to low complexity. 9 consecutive transmembrane segments (helical) span residues 270 to 290 (IFLIVLAMVIIWEILAAPLEW), 312 to 332 (LWIWGYLGASMGSIFITFLID), 345 to 365 (VSFHFFCYGGFLISTFFLSTL), 393 to 413 (IVLTALTVFVLGAVGSTIQNF), 425 to 445 (ELYMGLSIAAGLLSELALYFF), 457 to 477 (WMVVLGLLSLGIQFLYYSFLW), 480 to 500 (WSVVAIQILNAFSSGVIWWAI), 520 to 540 (LRWLAYGCGSSAGSFASGFII), and 546 to 566 (AVLYQACCITLLTWIVIFLLV).

The protein belongs to the major facilitator superfamily. MFSD6 family.

It is found in the membrane. The polypeptide is Major facilitator superfamily domain-containing protein 6-like protein B (mfsd6l-b) (Xenopus laevis (African clawed frog)).